A 356-amino-acid polypeptide reads, in one-letter code: UDP-N-acetylglucosamine--N-acetylmuramyl-(pentapeptide) pyrophosphoryl-undecaprenol N-acetylglucosamine transferase (356 aa).

UDP-N-acetyl-alpha-D-glucosamine contacts are provided by residues 14-16 (TGG), asparagine 126, arginine 162, serine 190, isoleucine 244, and glutamine 289.

It belongs to the glycosyltransferase 28 family. MurG subfamily.

The protein resides in the cell inner membrane. The catalysed reaction is di-trans,octa-cis-undecaprenyl diphospho-N-acetyl-alpha-D-muramoyl-L-alanyl-D-glutamyl-meso-2,6-diaminopimeloyl-D-alanyl-D-alanine + UDP-N-acetyl-alpha-D-glucosamine = di-trans,octa-cis-undecaprenyl diphospho-[N-acetyl-alpha-D-glucosaminyl-(1-&gt;4)]-N-acetyl-alpha-D-muramoyl-L-alanyl-D-glutamyl-meso-2,6-diaminopimeloyl-D-alanyl-D-alanine + UDP + H(+). Its pathway is cell wall biogenesis; peptidoglycan biosynthesis. Its function is as follows. Cell wall formation. Catalyzes the transfer of a GlcNAc subunit on undecaprenyl-pyrophosphoryl-MurNAc-pentapeptide (lipid intermediate I) to form undecaprenyl-pyrophosphoryl-MurNAc-(pentapeptide)GlcNAc (lipid intermediate II). The polypeptide is UDP-N-acetylglucosamine--N-acetylmuramyl-(pentapeptide) pyrophosphoryl-undecaprenol N-acetylglucosamine transferase (Cupriavidus necator (strain ATCC 17699 / DSM 428 / KCTC 22496 / NCIMB 10442 / H16 / Stanier 337) (Ralstonia eutropha)).